A 263-amino-acid polypeptide reads, in one-letter code: Lens fiber major intrinsic protein (263 aa).

The Cytoplasmic segment spans residues Met1–Phe9. The chain crosses the membrane as a helical span at residues Trp10–Gly29. The Extracellular portion of the chain corresponds to Ala30–Val41. Residues Leu42 to Val59 traverse the membrane as a helical segment. Residues Gly60 to His61 lie on the Cytoplasmic side of the membrane. The segment at residues Ile62–Val77 is an intramembrane region (discontinuously helical). The NPA 1 motif lies at Asn68–Ala70. Over Gly78–Ser82 the chain is Cytoplasmic. A helical membrane pass occupies residues Leu83 to Ser106. Over Val107–Val127 the chain is Extracellular. Residues Gly128–Thr148 form a helical membrane-spanning segment. Over Tyr149 to Arg156 the chain is Cytoplasmic. Residues Leu157–Gly175 traverse the membrane as a helical segment. The Extracellular segment spans residues Met176–Tyr178. The segment at residues Thr179–Ile193 is an intramembrane region (discontinuously helical). Residues Asn184–Ala186 carry the NPA 2 motif. Residues Leu194–Asn200 are Extracellular-facing. Residues His201 to Leu222 form a helical membrane-spanning segment. Over Leu223–Leu263 the chain is Cytoplasmic. Positions Leu227–Leu237 are interaction with CALM. Phosphoserine is present on residues Ser235, Ser243, and Ser245. A disordered region spans residues Ala240–Leu263. At Asn246 the chain carries Deamidated asparagine.

It belongs to the MIP/aquaporin (TC 1.A.8) family. As to quaternary structure, homotetramer; each monomer provides an independent water pore. Two homotetramers on opposing membranes can dimerize, forming a cell-cell junction. Interacts with CALM; the calcium-calmodulin/CALM complex interacts with the cytoplasmic domains of two aquaporins, leading to channel closure. Interacts with BFSP1 (via C-terminus); prevents calcium-dependent inhibition of the water channel activity. In terms of processing, subject to partial proteolytic cleavage in the eye lens core. Partial proteolysis promotes interactions between tetramers from adjoining membranes. Post-translationally, fatty acylated at Met-1 and Lys-238. The acyl modifications, in decreasing order of ion abundance, are: oleoyl (C18:1) &gt; palmitoyl (C16:0) &gt; stearoyl (C18:0) &gt; eicosenoyl (C20:1) &gt; dihomo-gamma-linolenoyl (C20:3) &gt; palmitoleoyl (C16:1) &gt; eicosadienoyl (C20:2).

It localises to the cell membrane. It is found in the cell junction. It catalyses the reaction H2O(in) = H2O(out). With respect to regulation, the water channel activity is inhibited by calcium through calmodulin/CALM. Functionally, aquaporins form homotetrameric transmembrane channels, with each monomer independently mediating water transport across the plasma membrane along its osmotic gradient. Specifically expressed in lens fiber cells, this aquaporin is crucial for maintaining lens water homeostasis and transparency. Beyond water permeability, it also acts as a cell-to-cell adhesion molecule, forming thin junctions between lens fiber cells that are essential for maintaining the ordered structure and transparency of the lens. This Canis lupus familiaris (Dog) protein is Lens fiber major intrinsic protein.